The sequence spans 311 residues: Formimidoylglutamase (311 aa).

The Mn(2+) site is built by His130, Asp155, His157, Asp159, Cys242, and Asp244.

The protein belongs to the arginase family. Mn(2+) serves as cofactor.

It catalyses the reaction N-formimidoyl-L-glutamate + H2O = formamide + L-glutamate. The protein operates within amino-acid degradation; L-histidine degradation into L-glutamate; L-glutamate from N-formimidoyl-L-glutamate (hydrolase route): step 1/1. In terms of biological role, catalyzes the conversion of N-formimidoyl-L-glutamate to L-glutamate and formamide. This Staphylococcus epidermidis (strain ATCC 35984 / DSM 28319 / BCRC 17069 / CCUG 31568 / BM 3577 / RP62A) protein is Formimidoylglutamase.